A 284-amino-acid chain; its full sequence is RCS-specific HTH-type transcriptional activator RclR (284 aa).

Cys21 and Cys89 form a disulfide bridge. One can recognise an HTH araC/xylS-type domain in the interval 177–278 (PRLGAVIQQM…GCTPGEYRER (102 aa)). DNA-binding regions (H-T-H motif) lie at residues 197 to 218 (ESLA…RDVS) and 245 to 268 (VVVI…VREF).

Its activity is regulated as follows. Oxydation of Cys-21 leads to partial activation of RclR, followed by the formation of an intramolecular disulfide bond between Cys-21 and Cys-89, which stabilizes the active form of RclR. Its function is as follows. Involved in reactive chlorine species (RCS) stress resistance. Up-regulates, in response to hypochlorous acid (HOCl), the expression of three genes essential for survival of RCS stress (rclA, rclB and rclC) and its own expression. The sequence is that of RCS-specific HTH-type transcriptional activator RclR (rclR) from Escherichia coli (strain K12).